A 1036-amino-acid polypeptide reads, in one-letter code: Integrin alpha-9 (1036 aa).

Residues 1–28 form the signal peptide; that stretch reads MGGPAAARTGAGGLRALLLALVAAGVPA. Residues 29–981 are Extracellular-facing; sequence GAYNLDAQRP…NLEPRGYVVG (953 aa). FG-GAP repeat units lie at residues 36–97, 109–175, 183–233, 234–290, 291–350, 352–409, and 412–475; these read QRPV…PDRR, RGAP…AKGK, EYKK…NTYF, KLND…SGTL, IKIF…GALE, QLTL…GIVP, and SMKL…LPGS. 3 disulfide bridges follow: Cys-88-Cys-98, Cys-143-Cys-163, and Cys-180-Cys-195. A glycan (N-linked (GlcNAc...) asparagine) is linked at Asn-226. Ca(2+)-binding residues include Asp-313, Asn-315, Asp-317, Asp-321, Asp-374, Asp-376, Asp-378, Asp-382, Asp-436, Asp-438, Asn-440, and Asp-444. A disulfide bond links Cys-483 and Cys-492. Asn-494 and Asn-515 each carry an N-linked (GlcNAc...) asparagine glycan. Intrachain disulfides connect Cys-498-Cys-556, Cys-621-Cys-626, and Cys-697-Cys-707. Residue Asn-808 is glycosylated (N-linked (GlcNAc...) asparagine). 2 disulfides stabilise this stretch: Cys-856–Cys-892 and Cys-899–Cys-904. A helical membrane pass occupies residues 982 to 1002; the sequence is WIIAISLLVGILIFLLLAVLL. The Cytoplasmic portion of the chain corresponds to 1003-1036; sequence WKMGFFRRRYKEIIEAEKNRKENEDGWDWVQKNQ. The short motif at 1006-1010 is the GFFKR motif element; it reads GFFRR.

It belongs to the integrin alpha chain family. Heterodimer of an alpha and a beta subunit. Alpha-9 (ITGA9) associates with beta-1 (ITGB1). Integrin ITGA9:ITGB1 interacts with FBLN5 (via N-terminus). Integrin ITGA9:ITGB1 interacts with SPP1/OPN (via N-terminus). Integrin ITGA9:ITGB1 interacts with TNC/TNFN3 (via the 3rd Fibronectin type-III domain). Integrin ITGA9:ITGB1 interacts with SVEP1/polydom (via Sushi domain 21); thereby inhibits Ca(2+) intracellular signaling and as a result represses vasocontraction. Expressed in the media layer of the arterial wall (at protein level). Expressed in the airway epithelium, skeletal muscle, basal keratincytes, the basal epithelium of the cornea, hepatocytes, giant cells in the spleen and smooth muscle of the stomach, duodenum and veins (at protein level).

It is found in the membrane. Integrin alpha-9/beta-1 (ITGA9:ITGB1) is a receptor for VCAM1, cytotactin and osteopontin. It recognizes the sequence A-E-I-D-G-I-E-L in cytotactin. ITGA9:ITGB1 may play a crucial role in SVEP1/polydom-mediated myoblast cell adhesion. Integrin ITGA9:ITGB1 represses PRKCA-mediated L-type voltage-gated channel Ca(2+) influx and ROCK-mediated calcium sensitivity in vascular smooth muscle cells via its interaction with SVEP1, thereby inhibiting vasocontraction. The polypeptide is Integrin alpha-9 (Mus musculus (Mouse)).